A 146-amino-acid polypeptide reads, in one-letter code: Acidic phospholipase A2 CM-II (146 aa).

A signal peptide spans 1–21 (MNPAHLLILAAVCVSPLGAFS). Residues 22 to 27 (NRPMPL) constitute a propeptide that is removed on maturation. 7 disulfide bridges follow: Cys38–Cys98, Cys53–Cys145, Cys55–Cys71, Cys70–Cys126, Cys77–Cys119, Cys87–Cys112, and Cys105–Cys117. Residues Tyr54, Gly56, and Gly58 each coordinate Ca(2+). His74 is a catalytic residue. A Ca(2+)-binding site is contributed by Asp75. Asp120 is a catalytic residue.

The protein belongs to the phospholipase A2 family. Group I subfamily. D49 sub-subfamily. The cofactor is Ca(2+). Expressed by the venom gland.

The protein resides in the secreted. The catalysed reaction is a 1,2-diacyl-sn-glycero-3-phosphocholine + H2O = a 1-acyl-sn-glycero-3-phosphocholine + a fatty acid + H(+). Its function is as follows. PLA2 catalyzes the calcium-dependent hydrolysis of the 2-acyl groups in 3-sn-phosphoglycerides. Is able to suppress the acetylcholine (ACh)-evoked current mediated by alpha-7 (CHRNA7)-similar nAChRs in L.stagnalis neurons (IC(50)=37 nM) and to compete with alpha-bungarotoxin for binding to muscle- and alpha-7 neuronal nAChR types, as well as to AChBPs. In inhibition of alpha-bungarotoxin binding, this toxin is similarly active against T.californica nAChR (IC(50)=1.2 uM), human alpha-7 nAChR (IC(50)=3.2 uM), and L.stagnalis AChBP (IC(50)=1.0 uM), whereas it is not active against A.californica AChBP (IC(50)&gt;100 uM). This is Acidic phospholipase A2 CM-II from Naja kaouthia (Monocled cobra).